Reading from the N-terminus, the 387-residue chain is RNA polymerase II elongation factor ELL3 (387 aa).

2 disordered regions span residues 127-148 (LTEG…EGHP) and 186-275 (LSNR…EEVP). Residues 230–239 (SPLQGLSNQD) are compositionally biased toward polar residues. Serine 240 carries the phosphoserine modification. The segment covering 240–251 (SPEEQDWGQDAD) has biased composition (acidic residues). Positions 257–271 (EQSLSVQSASESPSP) are enriched in low complexity. Residues 275–385 (PDYLLQYSTI…LILEFEEKNR (111 aa)) form the OCEL domain.

This sequence belongs to the ELL/occludin family. In terms of assembly, interacts with AFF4. Component of the super elongation complex (SEC), at least composed of EAF1, EAF2, CDK9, MLLT3/AF9, AFF (AFF1 or AFF4), the P-TEFb complex and ELL (ELL, ELL2 or ELL3). Component of the little elongation complex (LEC), at least composed of ELL (ELL, ELL2 or ELL3), ZC3H8, ICE1 and ICE2.

The protein localises to the nucleus. Enhancer-binding elongation factor that specifically binds enhancers in embryonic stem cells (ES cells), marks them, and is required for their future activation during stem cell specification. Elongation factor component of the super elongation complex (SEC), a complex required to increase the catalytic rate of RNA polymerase II transcription by suppressing transient pausing by the polymerase at multiple sites along the DNA. Component of the little elongation complex (LEC), a complex required to regulate small nuclear RNA (snRNA) gene transcription by RNA polymerase II and III. Does not only bind to enhancer regions of active genes, but also marks the enhancers that are in a poised or inactive state in ES cells and is required for establishing proper RNA polymerase II occupancy at developmentally regulated genes in a cohesin-dependent manner. Probably required for priming developmentally regulated genes for later recruitment of the super elongation complex (SEC), for transcriptional activation during differentiation. Required for recruitment of P-TEFb within SEC during differentiation. Probably preloaded on germ cell chromatin, suggesting that it may prime gene activation by marking enhancers as early as in the germ cells. Promoting epithelial-mesenchymal transition (EMT). The sequence is that of RNA polymerase II elongation factor ELL3 (Ell3) from Rattus norvegicus (Rat).